Reading from the N-terminus, the 922-residue chain is DNA gyrase subunit A (922 aa).

Residues 34–534 (LPDVRDGLKP…SSAEINIEDL (501 aa)) form the Topo IIA-type catalytic domain. Tyr-122 (O-(5'-phospho-DNA)-tyrosine intermediate) is an active-site residue. Positions 561–567 (QRRGGRG) match the GyrA-box motif. Disordered stretches follow at residues 715-763 (MQPM…VRPM) and 899-922 (IDGE…DPEE). Acidic residues predominate over residues 723–743 (DDVDGDDESVIDAGNDDDGSD).

Belongs to the type II topoisomerase GyrA/ParC subunit family. Heterotetramer, composed of two GyrA and two GyrB chains. In the heterotetramer, GyrA contains the active site tyrosine that forms a transient covalent intermediate with DNA, while GyrB binds cofactors and catalyzes ATP hydrolysis.

Its subcellular location is the cytoplasm. The enzyme catalyses ATP-dependent breakage, passage and rejoining of double-stranded DNA.. A type II topoisomerase that negatively supercoils closed circular double-stranded (ds) DNA in an ATP-dependent manner to modulate DNA topology and maintain chromosomes in an underwound state. Negative supercoiling favors strand separation, and DNA replication, transcription, recombination and repair, all of which involve strand separation. Also able to catalyze the interconversion of other topological isomers of dsDNA rings, including catenanes and knotted rings. Type II topoisomerases break and join 2 DNA strands simultaneously in an ATP-dependent manner. This Aeromonas salmonicida protein is DNA gyrase subunit A.